Reading from the N-terminus, the 574-residue chain is Penicillin-binding protein activator LpoA (574 aa).

The signal sequence occupies residues 1–25 (MTILLQRAKFKKRLMPILFPLMLAG). Cysteine 26 carries the N-palmitoyl cysteine lipid modification. Cysteine 26 is lipidated: S-diacylglycerol cysteine.

Belongs to the LpoA family. Interacts with PBP1a.

Its subcellular location is the cell outer membrane. Functionally, regulator of peptidoglycan synthesis that is essential for the function of penicillin-binding protein 1A (PBP1a). The sequence is that of Penicillin-binding protein activator LpoA from Mannheimia succiniciproducens (strain KCTC 0769BP / MBEL55E).